A 155-amino-acid polypeptide reads, in one-letter code: Ribosome maturation factor RimP (155 aa).

This sequence belongs to the RimP family.

The protein resides in the cytoplasm. Functionally, required for maturation of 30S ribosomal subunits. This Hamiltonella defensa subsp. Acyrthosiphon pisum (strain 5AT) protein is Ribosome maturation factor RimP.